Reading from the N-terminus, the 151-residue chain is Myosin light polypeptide 6 (151 aa).

At C2 the chain carries N-acetylcysteine. Positions D7–N42 constitute an EF-hand 1 domain. Phosphoserine is present on S57. K81 carries the N6-acetyllysine modification. An EF-hand 2 domain is found at G84–K119.

As to quaternary structure, myosin is a hexamer of 2 heavy chains and 4 light chains. Interacts with SPATA6.

Regulatory light chain of myosin. Does not bind calcium. The protein is Myosin light polypeptide 6 (MYL6) of Bos taurus (Bovine).